The following is a 50-amino-acid chain: Gene 38 protein (50 aa).

The protein is Gene 38 protein (38) of Mycobacterium (Mycobacteriophage D29).